A 311-amino-acid chain; its full sequence is Aspartate carbamoyltransferase catalytic subunit (311 aa).

The carbamoyl phosphate site is built by Arg59 and Thr60. Residue Lys87 participates in L-aspartate binding. Residues Arg109, His139, and Gln142 each contribute to the carbamoyl phosphate site. Positions 172 and 224 each coordinate L-aspartate. Residues Ala265 and Pro266 each contribute to the carbamoyl phosphate site.

Belongs to the aspartate/ornithine carbamoyltransferase superfamily. ATCase family. In terms of assembly, heterododecamer (2C3:3R2) of six catalytic PyrB chains organized as two trimers (C3), and six regulatory PyrI chains organized as three dimers (R2).

It catalyses the reaction carbamoyl phosphate + L-aspartate = N-carbamoyl-L-aspartate + phosphate + H(+). It functions in the pathway pyrimidine metabolism; UMP biosynthesis via de novo pathway; (S)-dihydroorotate from bicarbonate: step 2/3. In terms of biological role, catalyzes the condensation of carbamoyl phosphate and aspartate to form carbamoyl aspartate and inorganic phosphate, the committed step in the de novo pyrimidine nucleotide biosynthesis pathway. This chain is Aspartate carbamoyltransferase catalytic subunit, found in Streptococcus pyogenes serotype M18 (strain MGAS8232).